The following is a 353-amino-acid chain: Ribosomal RNA small subunit methyltransferase H (353 aa).

S-adenosyl-L-methionine contacts are provided by residues glycine 49–histidine 51, aspartate 68, phenylalanine 95, aspartate 126, and glutamine 133.

The protein belongs to the methyltransferase superfamily. RsmH family.

The protein localises to the cytoplasm. It carries out the reaction cytidine(1402) in 16S rRNA + S-adenosyl-L-methionine = N(4)-methylcytidine(1402) in 16S rRNA + S-adenosyl-L-homocysteine + H(+). In terms of biological role, specifically methylates the N4 position of cytidine in position 1402 (C1402) of 16S rRNA. The protein is Ribosomal RNA small subunit methyltransferase H of Corynebacterium urealyticum (strain ATCC 43042 / DSM 7109).